The primary structure comprises 1125 residues: Transient receptor potential cation channel subfamily A member 1 (1125 aa).

The Cytoplasmic portion of the chain corresponds to 1 to 721 (MKRGLRRILL…KWCAYGFRAH (721 aa)). ANK repeat units follow at residues 63–94 (ENLC…VLNI), 98–127 (YGNT…NPNL), 131–161 (NMMS…NINL), 165–194 (NGNT…KLCK), 198–227 (WGDY…KNGY), 239–268 (KKAS…HIDM), 272–301 (AKCM…GSSD), 309–338 (NQET…DINS), and 342–371 (EGRS…KVDI). 5 cysteine pairs are disulfide-bonded: cysteine 193-cysteine 666, cysteine 463-cysteine 666, cysteine 609-cysteine 622, cysteine 622-cysteine 666, and cysteine 634-cysteine 859. Proline 395 is subject to 4-hydroxyproline; transient. ANK repeat units lie at residues 413 to 442 (DGCT…SIHS), 446 to 475 (DKKS…DTRL), 482 to 511 (HGMT…LFLS), 514 to 543 (NGWT…KCTD), and 548 to 577 (EGNT…DILL). Cysteine 415 and cysteine 422 together coordinate (E)-cinnamaldehyde. Residue cysteine 622 participates in (E)-cinnamaldehyde binding. At cysteine 634 the chain carries Cysteine sulfenic acid (-SOH); transient; in hyperoxia. 3 residues coordinate (E)-cinnamaldehyde: cysteine 642, cysteine 666, and lysine 712. A helical transmembrane segment spans residues 722–742 (MMNLGSYCLGLIPMTLLVVKI). The Extracellular portion of the chain corresponds to 743–767 (QPGMAFNSTGIINGTSSTHEERIDT). N-linked (GlcNAc...) asparagine glycans are attached at residues asparagine 749 and asparagine 755. The helical transmembrane segment at 768–788 (LNSFPIKICMILVFLSSIFGY) threads the bilayer. The Cytoplasmic portion of the chain corresponds to 789-806 (CKEVIQIFQQKRNYFLDY). Residues glutamate 791, glutamine 794, asparagine 808, and glutamate 811 each contribute to the Ca(2+) site. The chain crosses the membrane as a helical span at residues 807–827 (NNALEWVIYTTSIIFVLPLFL). The Extracellular segment spans residues 828–832 (NIPAY). Residues 833-853 (MQWQCGAIAIFFYWMNFLLYL) form a helical membrane-spanning segment. The Cytoplasmic segment spans residues 854-876 (QRFENCGIFIVMLEVIFKTLLRS). Cysteine 859 bears the Cysteine sulfenic acid (-SOH); transient; in hyperoxia mark. The helical transmembrane segment at 877–897 (TGVFIFLLLAFGLSFYVLLNF) threads the bilayer. At 898–904 (QDAFSTP) the chain is on the extracellular side. The segment at residues 905 to 925 (LLSLIQTFSMMLGDINYRDAF) is an intramembrane region (pore-forming). Residues 926–937 (LEPLFRNELAYP) are Extracellular-facing. The helical transmembrane segment at 938-959 (VLTFGQLIAFTMFVPIVLMNLL) threads the bilayer. Topologically, residues 960–1125 (IGLAVGDIAE…THCSISHPDF (166 aa)) are cytoplasmic. Residues 1044–1073 (MEILKQKYRLKDLTSLLEKQHELIKLIIQK) are a coiled coil. Residue 1048–1054 (KQKYRLK) participates in a 1,2-diacyl-sn-glycero-3-phospho-(1D-myo-inositol) binding.

It belongs to the transient receptor (TC 1.A.4) family. Homotetramer. Interacts with TMEM100. Interacts with EGLN1. Interacts with the scorpion wasabi receptor toxin at the same site that electrophiles but in a non-covalent manner. In terms of processing, TRPA1 activation by electrophiles occurs though covalent modification of specific cysteine residues in the N-terminal cytoplasmic domain. Post-translationally, hydroxylation is required for TRPA1 activity inhibition in normoxia. In hypoxia, the decrease in oxygen concentration diminishes the activity of the hydroxylase EGLN1, thus relieving TRPA1 from inhibition and ultimately leading to channel activation. Oxidation of Cys-634 and Cys-859 in hyperoxia may override the hydroxylase EGLN1-mediated inhibition, causing TRPA1 activation. As to expression, expressed in inner ear (at protein level). Specifically expressed in a subset of nociceptive neurons. Expressed in the same neurons that TRPV1. In contrast, it is not expressed in neurons expressing TRPM8. Expressed in the superior cervical ganglion of vagus nerve. Expressed in the inferior ganglion (nodose ganglion) of vagus nerve. Expressed in dorsal root ganglia neurons.

The protein localises to the cell membrane. The catalysed reaction is Ca(2+)(in) = Ca(2+)(out). It catalyses the reaction Mg(2+)(in) = Mg(2+)(out). It carries out the reaction Na(+)(in) = Na(+)(out). The enzyme catalyses K(+)(in) = K(+)(out). The catalysed reaction is Zn(2+)(in) = Zn(2+)(out). Its activity is regulated as follows. Electrophilic ligands activate the channel by covalent modification of intracellular cysteines. Cys-622 plays a key role in covalent binding of electrophiles. Extracellular Ca(2+) both potentiates and inactivates TRPA1; a rapid potentiation follows by slow desensitization. Activated by increase in intracellular Ca(2+) concentration. Inhibited by the potent blocker of TRPV channels ruthenium red, A-967079. Activated by icilin, sulfhydryl reactive agent MTSEA, N-methyl maleimide (NMM), and PF-4840154. Also activated by hyperoxia. Activated by intracellular Zn(2+). TRPA1 activation may critically depend on the presence of small intracellular compounds such as polyphosphates. Ligand-activated Ca(2+)-permeable, nonselective cation channel. Involved in pain detection and possibly also in cold perception, oxygen concentration perception, cough, itch, and inner ear function. Has a relatively high Ca(2+) selectivity, with a preference for divalent over monovalent cations (Ca(2+) &gt; Ba(2+) &gt; Mg(2+) &gt; NH4(+) &gt; Li(+) &gt; K(+)), the influx of cation into the cytoplasm, leads to membrane depolarization. Has a central role in the pain response to endogenous inflammatory mediators, such as bradykinin and to a diverse array of irritants. Activated by a large variety of structurally unrelated electrophilic and non-electrophilic chemical compounds, such as allylthiocyanate (AITC) from mustard oil or wasabi, cinnamaldehyde, diallyl disulfide (DADS) from garlic, and acrolein, an environmental irritant. Electrophilic ligands activate TRPA1 by interacting with critical N-terminal Cys residues in a covalent manner. Non-electrophile agonists bind at distinct sites in the transmembrane domain to promote channel activation. Also acts as an ionotropic cannabinoid receptor by being activated by delta(9)-tetrahydrocannabinol (THC), the psychoactive component of marijuana. May be a component for the mechanosensitive transduction channel of hair cells in inner ear, thereby participating in the perception of sounds. The polypeptide is Transient receptor potential cation channel subfamily A member 1 (Mus musculus (Mouse)).